A 212-amino-acid chain; its full sequence is Nuclear phosphoprotein UL3 homolog (212 aa).

The protein belongs to the alphaherpesvirinae HHV-1 UL3 family. Phosphorylated.

It is found in the host nucleus. The protein is Nuclear phosphoprotein UL3 homolog of Equus caballus (Horse).